A 774-amino-acid polypeptide reads, in one-letter code: Chondroitin sulfate synthase 2 (774 aa).

The Cytoplasmic segment spans residues 1 to 15; that stretch reads MRASLLLSVLRPAGP. The helical; Signal-anchor for type II membrane protein transmembrane segment at 16–34 threads the bilayer; the sequence is VAVGISLGFTLSLLSVTWV. Topologically, residues 35-774 are lumenal; it reads EEPCGPGPPQ…LFEQEQGNST (740 aa). The disordered stretch occupies residues 37–103; sequence PCGPGPPQPG…AQPGQATKKA (67 aa). Residues 54-67 show a composition bias toward polar residues; that stretch reads GNTNAARRPNSVQP. N-linked (GlcNAc...) asparagine glycans are attached at residues Asn-138 and Asn-361. An a divalent metal cation-binding site is contributed by Asp-616.

It belongs to the chondroitin N-acetylgalactosaminyltransferase family. As to quaternary structure, interacts with PRKN. Mn(2+) is required as a cofactor. Co(2+) serves as cofactor. As to expression, isoform 1, isoform 2 and isoform 3 are expressed in brain (at protein level).

It localises to the golgi apparatus. Its subcellular location is the golgi stack membrane. It is found in the cytoplasm. The protein localises to the cytosol. The protein resides in the mitochondrion. It localises to the mitochondrion matrix. The enzyme catalyses 3-O-(beta-D-GlcA-(1-&gt;3)-beta-D-GalNAc-(1-&gt;4)-beta-D-GlcA-(1-&gt;3)-beta-D-Gal-(1-&gt;3)-beta-D-Gal-(1-&gt;4)-beta-D-Xyl)-L-seryl-[protein] + UDP-N-acetyl-alpha-D-galactosamine = 3-O-(beta-D-GalNAc-(1-&gt;4)-beta-D-GlcA-(1-&gt;3)-beta-D-GalNAc-(1-&gt;4)-beta-D-GlcA-(1-&gt;3)-beta-D-Gal-(1-&gt;3)-beta-D-Gal-(1-&gt;4)-beta-D-Xyl)-L-seryl-[protein] + UDP + H(+). The catalysed reaction is 3-O-{beta-D-GlcA-(1-&gt;3)-[beta-D-GalNAc-(1-&gt;4)-beta-D-GlcA-(1-&gt;3)](n)-beta-D-GalNAc-(1-&gt;4)-beta-D-GlcA-(1-&gt;3)-beta-D-Gal-(1-&gt;3)-beta-D-Gal-(1-&gt;4)-beta-D-Xyl}-L-seryl-[protein] + UDP-N-acetyl-alpha-D-galactosamine = 3-O-{[beta-D-GalNAc-(1-&gt;4)-beta-D-GlcA-(1-&gt;3)](n+1)-beta-D-GalNAc-(1-&gt;4)-beta-D-GlcA-(1-&gt;3)-beta-D-Gal-(1-&gt;3)-beta-D-Gal-(1-&gt;4)-beta-D-Xyl}-L-seryl-[protein] + UDP + H(+). It carries out the reaction 3-O-(beta-D-GalNAc-(1-&gt;4)-beta-D-GlcA-(1-&gt;3)-beta-D-Gal-(1-&gt;3)-beta-D-Gal-(1-&gt;4)-beta-D-Xyl)-L-seryl-[protein] + UDP-alpha-D-glucuronate = 3-O-(beta-D-GlcA-(1-&gt;3)-beta-D-GalNAc-(1-&gt;4)-beta-D-GlcA-(1-&gt;3)-beta-D-Gal-(1-&gt;3)-beta-D-Gal-(1-&gt;4)-beta-D-Xyl)-L-seryl-[protein] + UDP + H(+). It catalyses the reaction 3-O-{[beta-D-GalNAc-(1-&gt;4)-beta-D-GlcA-(1-&gt;3)](n)-beta-D-GalNAc-(1-&gt;4)-beta-D-GlcA-(1-&gt;3)-beta-D-Gal-(1-&gt;3)-beta-D-Gal-(1-&gt;4)-beta-D-Xyl}-L-seryl-[protein] + UDP-alpha-D-glucuronate = 3-O-{beta-D-GlcA-(1-&gt;3)-[beta-D-GalNAc-(1-&gt;4)-beta-D-GlcA-(1-&gt;3)](n)-beta-D-GalNAc-(1-&gt;4)-beta-D-GlcA-(1-&gt;3)-beta-D-Gal-(1-&gt;3)-beta-D-Gal-(1-&gt;4)-beta-D-Xyl}-L-seryl-[protein] + UDP + H(+). Has both beta-1,3-glucuronic acid and beta-1,4-N-acetylgalactosamine transferase activity. Transfers glucuronic acid (GlcUA) from UDP-GlcUA and N-acetylgalactosamine (GalNAc) from UDP-GalNAc to the non-reducing end of the elongating chondroitin polymer. Seems to act as a specific activating factor for CHSY1 in chondroitin polymerization. In terms of biological role, may facilitate PRKN transport into the mitochondria. In collaboration with PRKN, may enhance cell viability and protect cells from oxidative stress. The chain is Chondroitin sulfate synthase 2 from Mus musculus (Mouse).